Reading from the N-terminus, the 324-residue chain is Inhibitor of growth protein 1 homolog (324 aa).

A disordered region spans residues 120–237; it reads AEEEKKKKKS…SSRKQKSMAA (118 aa). Positions 140-169 are enriched in low complexity; it reads SSTTSSSSSSSSSSLSLSSSTNNTSSLNSS. A compositionally biased stretch (gly residues) spans 170 to 186; it reads SGGGGGGSGGGGGGGGH. The segment covering 201–229 has biased composition (low complexity); the sequence is SLTSSSSSGNINGMSSSSSSSSSSSSLSS. The PHD-type zinc-finger motif lies at 271-320; the sequence is PTYCFCNRVSFGEMVGCENPDCKIEWFHFECVGLTSTPKGKWYCPDCTRI. 8 residues coordinate Zn(2+): C274, C276, C287, C292, H298, C301, C314, and C317.

Belongs to the ING family. As to quaternary structure, interacts with H3K4me3 and to a lesser extent with H3K4me2.

The protein resides in the nucleus. Its function is as follows. Involved in regulation of the growth and differentiation transition (GDT) process, probably by regulating gene expression via histone modification. In Dictyostelium discoideum (Social amoeba), this protein is Inhibitor of growth protein 1 homolog.